Consider the following 268-residue polypeptide: 4-hydroxy-tetrahydrodipicolinate reductase (268 aa).

Residue 8–13 (GAAGRM) coordinates NAD(+). Arginine 36 contacts NADP(+). NAD(+) is bound by residues 99-101 (GTT) and 123-126 (AANF). The active-site Proton donor/acceptor is histidine 156. A (S)-2,3,4,5-tetrahydrodipicolinate-binding site is contributed by histidine 157. Lysine 160 serves as the catalytic Proton donor. 166-167 (GT) is a (S)-2,3,4,5-tetrahydrodipicolinate binding site.

Belongs to the DapB family.

The protein localises to the cytoplasm. It catalyses the reaction (S)-2,3,4,5-tetrahydrodipicolinate + NAD(+) + H2O = (2S,4S)-4-hydroxy-2,3,4,5-tetrahydrodipicolinate + NADH + H(+). It carries out the reaction (S)-2,3,4,5-tetrahydrodipicolinate + NADP(+) + H2O = (2S,4S)-4-hydroxy-2,3,4,5-tetrahydrodipicolinate + NADPH + H(+). The protein operates within amino-acid biosynthesis; L-lysine biosynthesis via DAP pathway; (S)-tetrahydrodipicolinate from L-aspartate: step 4/4. Its function is as follows. Catalyzes the conversion of 4-hydroxy-tetrahydrodipicolinate (HTPA) to tetrahydrodipicolinate. This chain is 4-hydroxy-tetrahydrodipicolinate reductase, found in Pseudomonas fluorescens (strain SBW25).